The sequence spans 161 residues: uncharacterized protein (161 aa).

Residues 126–161 (TPSNCGESSTSSGQSSGDESNCSLRTHGVYTRGEQH) form a disordered region. The span at 128–148 (SNCGESSTSSGQSSGDESNCS) shows a compositional bias: low complexity.

It belongs to the herpesviridae US1 family.

This is an uncharacterized protein from Human cytomegalovirus (strain AD169) (HHV-5).